The following is a 121-amino-acid chain: Large ribosomal subunit protein bL21c (121 aa).

This sequence belongs to the bacterial ribosomal protein bL21 family. Part of the 50S ribosomal subunit.

The protein localises to the plastid. The protein resides in the chloroplast. Its function is as follows. This protein binds to 23S rRNA. The polypeptide is Large ribosomal subunit protein bL21c (Chaetosphaeridium globosum (Charophycean green alga)).